A 417-amino-acid chain; its full sequence is Probable secreted beta-glucosidase PSU1 (417 aa).

The signal sequence occupies residues 1–18 (MRFFETLALALLTTGALA).

The protein belongs to the SUN family.

The protein localises to the secreted. It is found in the cell wall. In terms of biological role, involved in cell wall synthesis. May be required for the activation of 1,3-beta-glucan synthase. The sequence is that of Probable secreted beta-glucosidase PSU1 (psu1) from Schizosaccharomyces pombe (strain 972 / ATCC 24843) (Fission yeast).